The sequence spans 512 residues: Replication initiation protein (512 aa).

Its function is as follows. Essential for replication. Binds specifically to a 60-bp region corresponding to the putative origin of replication of pXO2. Also binds nonspecifically to single-stranded DNA with lower affinity. This Bacillus anthracis protein is Replication initiation protein (repS).